We begin with the raw amino-acid sequence, 564 residues long: Phosphoinositide phospholipase C 3 (564 aa).

An EF-hand domain is found at T19–E54. A PI-PLC X-box domain is found at H106–K250. Residues H121 and H167 contribute to the active site. The 117-residue stretch at R296 to L412 folds into the PI-PLC Y-box domain. The 134-residue stretch at K406–H539 folds into the C2 domain. Ca(2+) is bound by residues D450, D456, D509, D511, and D517.

The cofactor is Ca(2+). In terms of tissue distribution, expressed in leaves, roots and siliques, but not in flowers.

It localises to the cell membrane. It carries out the reaction a 1,2-diacyl-sn-glycero-3-phospho-(1D-myo-inositol-4,5-bisphosphate) + H2O = 1D-myo-inositol 1,4,5-trisphosphate + a 1,2-diacyl-sn-glycerol + H(+). Its function is as follows. The production of the second messenger molecules diacylglycerol (DAG) and inositol 1,4,5-trisphosphate (IP3) is mediated by activated phosphatidylinositol-specific phospholipase C enzymes. The chain is Phosphoinositide phospholipase C 3 (PLC3) from Arabidopsis thaliana (Mouse-ear cress).